Here is a 571-residue protein sequence, read N- to C-terminus: Proline--tRNA ligase (571 aa).

This sequence belongs to the class-II aminoacyl-tRNA synthetase family. ProS type 1 subfamily. As to quaternary structure, homodimer.

The protein localises to the cytoplasm. The catalysed reaction is tRNA(Pro) + L-proline + ATP = L-prolyl-tRNA(Pro) + AMP + diphosphate. Catalyzes the attachment of proline to tRNA(Pro) in a two-step reaction: proline is first activated by ATP to form Pro-AMP and then transferred to the acceptor end of tRNA(Pro). As ProRS can inadvertently accommodate and process non-cognate amino acids such as alanine and cysteine, to avoid such errors it has two additional distinct editing activities against alanine. One activity is designated as 'pretransfer' editing and involves the tRNA(Pro)-independent hydrolysis of activated Ala-AMP. The other activity is designated 'posttransfer' editing and involves deacylation of mischarged Ala-tRNA(Pro). The misacylated Cys-tRNA(Pro) is not edited by ProRS. The polypeptide is Proline--tRNA ligase (Acinetobacter baumannii (strain ATCC 17978 / DSM 105126 / CIP 53.77 / LMG 1025 / NCDC KC755 / 5377)).